The chain runs to 227 residues: Probable septum site-determining protein MinC (227 aa).

The protein belongs to the MinC family. Interacts with MinD and FtsZ.

Cell division inhibitor that blocks the formation of polar Z ring septums. Rapidly oscillates between the poles of the cell to destabilize FtsZ filaments that have formed before they mature into polar Z rings. Prevents FtsZ polymerization. In Shouchella clausii (strain KSM-K16) (Alkalihalobacillus clausii), this protein is Probable septum site-determining protein MinC.